The following is a 186-amino-acid chain: Elongation factor P (186 aa).

Belongs to the elongation factor P family.

Its subcellular location is the cytoplasm. It functions in the pathway protein biosynthesis; polypeptide chain elongation. Involved in peptide bond synthesis. Stimulates efficient translation and peptide-bond synthesis on native or reconstituted 70S ribosomes in vitro. Probably functions indirectly by altering the affinity of the ribosome for aminoacyl-tRNA, thus increasing their reactivity as acceptors for peptidyl transferase. This chain is Elongation factor P, found in Ruminiclostridium cellulolyticum (strain ATCC 35319 / DSM 5812 / JCM 6584 / H10) (Clostridium cellulolyticum).